The following is a 251-amino-acid chain: Ribonuclease PH (251 aa).

Phosphate-binding positions include Arg-90 and 128-130 (GTR).

The protein belongs to the RNase PH family. As to quaternary structure, homohexameric ring arranged as a trimer of dimers.

It catalyses the reaction tRNA(n+1) + phosphate = tRNA(n) + a ribonucleoside 5'-diphosphate. Phosphorolytic 3'-5' exoribonuclease that plays an important role in tRNA 3'-end maturation. Removes nucleotide residues following the 3'-CCA terminus of tRNAs; can also add nucleotides to the ends of RNA molecules by using nucleoside diphosphates as substrates, but this may not be physiologically important. Probably plays a role in initiation of 16S rRNA degradation (leading to ribosome degradation) during starvation. In Leifsonia xyli subsp. xyli (strain CTCB07), this protein is Ribonuclease PH.